The primary structure comprises 59 residues: Large ribosomal subunit protein bL32 (59 aa).

The tract at residues 1–23 (MAVQQNKKSPSKRGMHRSHDFLT) is disordered.

Belongs to the bacterial ribosomal protein bL32 family.

This chain is Large ribosomal subunit protein bL32, found in Burkholderia multivorans (strain ATCC 17616 / 249).